The following is a 372-amino-acid chain: Cytoplasmic envelopment protein 2 (372 aa).

The segment at Met1–Pro38 is disordered. Over residues Ala20–Asp30 the composition is skewed to low complexity.

It belongs to the herpesviridae cytoplasmic envelopment protein 2 family. As to quaternary structure, interacts with cytoplasmic envelopment protein 3 and with the capsid.

The protein resides in the virion tegument. It is found in the host cytoplasm. The protein localises to the host nucleus. In terms of biological role, plays a critical role in cytoplasmic virus egress. Participates in the final step of tegumentation and envelope acquisition within the host cytoplasm by directly interacting with the capsid. Upon virion binding to target cell, a signaling cascade is triggered to disrupt the interaction with the capsid, thereby preparing capsid uncoating. This chain is Cytoplasmic envelopment protein 2 (UL16), found in Human herpesvirus 2 (strain HG52) (HHV-2).